The sequence spans 52 residues: Light-harvesting protein B800/830/1020 alpha-1 chain (52 aa).

The Cytoplasmic segment spans residues 1–12 (MWRIWKVFDPRR). A helical transmembrane segment spans residues 13-33 (ILIATAIWLIIIALTIHVILM). H29 is an a bacteriochlorophyll binding site. Topologically, residues 34 to 52 (TTERFNWLEGAPAAEYYSS) are periplasmic.

This sequence belongs to the antenna complex alpha subunit family. As to quaternary structure, the core complex is formed by different alpha and beta chains, binding bacteriochlorophyll molecules, and arranged most probably in tetrameric structures disposed around the reaction center. The non-pigmented gamma chains may constitute additional components.

The protein resides in the cell inner membrane. Its function is as follows. Antenna complexes are light-harvesting systems, which transfer the excitation energy to the reaction centers. The chain is Light-harvesting protein B800/830/1020 alpha-1 chain from Halorhodospira halochloris (Ectothiorhodospira halochloris).